We begin with the raw amino-acid sequence, 316 residues long: Probable cell division protein WhiA (316 aa).

Positions 275-309 (TLKELGEMVSGGKISKSGINHRLRKIDEIAEKLRA) form a DNA-binding region, H-T-H motif.

This sequence belongs to the WhiA family.

Involved in cell division and chromosome segregation. The chain is Probable cell division protein WhiA from Bacillus cereus (strain G9842).